The primary structure comprises 424 residues: GTPase Obg (424 aa).

In terms of domain architecture, Obg spans 1 to 158 (MFIDTAKILV…RMINLEIKLL (158 aa)). Residues 159–331 (ADVGLIGFPN…LIKEVTRQLS (173 aa)) enclose the OBG-type G domain. GTP-binding positions include 165–172 (GFPNVGKS), 190–194 (FTTLK), 212–215 (DIPG), 282–285 (NKID), and 312–314 (SAA). Serine 172 and threonine 192 together coordinate Mg(2+). Positions 345-424 (RFMPEEKRFT…LNDFEFDFLL (80 aa)) constitute an OCT domain.

It belongs to the TRAFAC class OBG-HflX-like GTPase superfamily. OBG GTPase family. Monomer. The cofactor is Mg(2+).

Its subcellular location is the cytoplasm. Its function is as follows. An essential GTPase which binds GTP, GDP and possibly (p)ppGpp with moderate affinity, with high nucleotide exchange rates and a fairly low GTP hydrolysis rate. Plays a role in control of the cell cycle, stress response, ribosome biogenesis and in those bacteria that undergo differentiation, in morphogenesis control. In Clostridium novyi (strain NT), this protein is GTPase Obg.